Here is a 657-residue protein sequence, read N- to C-terminus: MSSPSKAIELQLQMKQNAEELQDFMRDLENWEKDIKQTDAKLRNQTGVDSQILPPIRNKDFKKKKKSKSKPPLEKKSQEDEIKPKKKLLDYEYWDKLDVDRALEDIDKDNNESSSESECGDEDGITVDTEKALLEKEKGNNYFKSGQYDEAIECYTRGMDADPYNAVLPTNRASAFFRLKKYAVAESDCNLAIALNHNYAKAYARRGAARLALKDLQGAKEDYEKVLELDVNNFEAKNELRKINKELQSSTSDVQEKEAIEEKITVENEEEKKQIEIQQRKQQAIMQKDLGNAYFKEGKYEIAIDCYSQGMEADTTNALLPANRAMAYLKIQKYKEAETDCTLAISLDASYCKAFARRGTARIMLGKQKEAKEDFEMVLKLDPGNKQAVLELEKISRELRSNEKDTKGNKERKLINAVEKLPHQRSTKPLRRMVIEEVGGPVESCISSLNESNHGKADSMDLITKADKQDLNEEQNFCSLPDVPSAKVPKIEEISDTYGSCEPSSGEEHSVSQPSPPKIEKVVTTFSESLNIGIPVVPTNSFQLESDFRRLKGNPDLLYRYLKQIEPSFYGKLFQKALDPDLFSEILTILREQYINKDSCDLIFEILQRLSELKRFDMAVMFLSGSDRNNAHILFSHLEQSLKGSVSLNALKKKYGL.

Residues 39-82 (DAKLRNQTGVDSQILPPIRNKDFKKKKKSKSKPPLEKKSQEDEI) form a disordered region. Residues 60–69 (DFKKKKKSKS) are compositionally biased toward basic residues. A compositionally biased stretch (basic and acidic residues) spans 71 to 82 (PPLEKKSQEDEI). TPR repeat units follow at residues 132–165 (ALLE…DPYN), 167–199 (VLPT…NHNY), 200–233 (AKAY…DVNN), 284–317 (AIMQ…DTTN), 319–351 (LLPA…DASY), 352–385 (CKAF…DPGN), and 503–536 (PSSG…GIPV). Positions 496 to 517 (DTYGSCEPSSGEEHSVSQPSPP) are disordered.

It belongs to the RPAP3 family.

Its function is as follows. May for an interface between the RNA polymerase II enzyme and chaperone/scaffolding protein. In Xenopus tropicalis (Western clawed frog), this protein is RNA polymerase II-associated protein 3 (rpap3).